A 968-amino-acid chain; its full sequence is Probable histidine kinase 1 (968 aa).

2 coiled-coil regions span residues 89–120 and 169–204; these read LLKE…FQDE and KERA…QSHT. Residues 372-655 enclose the Histidine kinase domain; that stretch reads TMSHEIRSPL…TFSFVLPCKI (284 aa). H375 is subject to Phosphohistidine; by autocatalysis. The tract at residues 737 to 757 is disordered; the sequence is STNSASTAHQSNGPSVSRTNK. The segment covering 738–754 has biased composition (polar residues); it reads TNSASTAHQSNGPSVSR. One can recognise a Response regulatory domain in the interval 818–965; sequence KILLVEDNKV…NIKECLQQYL (148 aa). A 4-aspartylphosphate modification is found at D867.

Activation probably requires a transfer of a phosphate group between a His in the transmitter domain and an Asp of the receiver domain.

The catalysed reaction is ATP + protein L-histidine = ADP + protein N-phospho-L-histidine.. Cytokinin receptor related to bacterial two-component regulators. Functions as a histidine kinase and transmits the stress signal to a downstream MAPK cascade. The polypeptide is Probable histidine kinase 1 (Oryza sativa subsp. indica (Rice)).